The sequence spans 364 residues: Aminomethyltransferase (364 aa).

It belongs to the GcvT family. In terms of assembly, the glycine cleavage system is composed of four proteins: P, T, L and H.

It carries out the reaction N(6)-[(R)-S(8)-aminomethyldihydrolipoyl]-L-lysyl-[protein] + (6S)-5,6,7,8-tetrahydrofolate = N(6)-[(R)-dihydrolipoyl]-L-lysyl-[protein] + (6R)-5,10-methylene-5,6,7,8-tetrahydrofolate + NH4(+). The glycine cleavage system catalyzes the degradation of glycine. This chain is Aminomethyltransferase, found in Escherichia coli (strain SMS-3-5 / SECEC).